A 290-amino-acid polypeptide reads, in one-letter code: 4-diphosphocytidyl-2-C-methyl-D-erythritol kinase (290 aa).

Lysine 8 is an active-site residue. 92-102 (PISAGLAGGST) serves as a coordination point for ATP. Aspartate 134 is an active-site residue.

It belongs to the GHMP kinase family. IspE subfamily.

The enzyme catalyses 4-CDP-2-C-methyl-D-erythritol + ATP = 4-CDP-2-C-methyl-D-erythritol 2-phosphate + ADP + H(+). It functions in the pathway isoprenoid biosynthesis; isopentenyl diphosphate biosynthesis via DXP pathway; isopentenyl diphosphate from 1-deoxy-D-xylulose 5-phosphate: step 3/6. Catalyzes the phosphorylation of the position 2 hydroxy group of 4-diphosphocytidyl-2C-methyl-D-erythritol. The polypeptide is 4-diphosphocytidyl-2-C-methyl-D-erythritol kinase (Caldicellulosiruptor saccharolyticus (strain ATCC 43494 / DSM 8903 / Tp8T 6331)).